The chain runs to 521 residues: GMP synthase [glutamine-hydrolyzing] (521 aa).

The Glutamine amidotransferase type-1 domain occupies 8 to 203 (KILILDFGAQ…VVDICGCQTL (196 aa)). Catalysis depends on C85, which acts as the Nucleophile. Catalysis depends on residues H177 and E179. The region spanning 204–396 (WTAANIIDDQ…LGLPRTMVYR (193 aa)) is the GMPS ATP-PPase domain. 231 to 237 (SGGVDSS) serves as a coordination point for ATP.

In terms of assembly, homodimer.

It catalyses the reaction XMP + L-glutamine + ATP + H2O = GMP + L-glutamate + AMP + diphosphate + 2 H(+). It participates in purine metabolism; GMP biosynthesis; GMP from XMP (L-Gln route): step 1/1. Functionally, catalyzes the synthesis of GMP from XMP. This Xanthomonas oryzae pv. oryzae (strain PXO99A) protein is GMP synthase [glutamine-hydrolyzing].